Here is a 267-residue protein sequence, read N- to C-terminus: GTP cyclohydrolase FolE2 (267 aa).

It belongs to the GTP cyclohydrolase IV family.

It catalyses the reaction GTP + H2O = 7,8-dihydroneopterin 3'-triphosphate + formate + H(+). The protein operates within cofactor biosynthesis; 7,8-dihydroneopterin triphosphate biosynthesis; 7,8-dihydroneopterin triphosphate from GTP: step 1/1. Its function is as follows. Converts GTP to 7,8-dihydroneopterin triphosphate. The protein is GTP cyclohydrolase FolE2 of Geobacter sp. (strain M21).